We begin with the raw amino-acid sequence, 211 residues long: ATP phosphoribosyltransferase (211 aa).

It belongs to the ATP phosphoribosyltransferase family. Short subfamily. As to quaternary structure, heteromultimer composed of HisG and HisZ subunits.

It is found in the cytoplasm. The enzyme catalyses 1-(5-phospho-beta-D-ribosyl)-ATP + diphosphate = 5-phospho-alpha-D-ribose 1-diphosphate + ATP. The protein operates within amino-acid biosynthesis; L-histidine biosynthesis; L-histidine from 5-phospho-alpha-D-ribose 1-diphosphate: step 1/9. In terms of biological role, catalyzes the condensation of ATP and 5-phosphoribose 1-diphosphate to form N'-(5'-phosphoribosyl)-ATP (PR-ATP). Has a crucial role in the pathway because the rate of histidine biosynthesis seems to be controlled primarily by regulation of HisG enzymatic activity. This Pseudomonas syringae pv. syringae (strain B728a) protein is ATP phosphoribosyltransferase.